A 507-amino-acid polypeptide reads, in one-letter code: Alkyl hydroperoxide reductase subunit F (507 aa).

207-222 (DVLIVGGGPASGSAAI) is a binding site for FAD. A disulfide bond links Cys-335 and Cys-338. 347–361 (DVAVIGGGNSGVEAA) contacts NAD(+). Position 467–477 (467–477 (TNVPGIFAAGD)) interacts with FAD.

Belongs to the class-II pyridine nucleotide-disulfide oxidoreductase family. As to quaternary structure, homodimer. FAD is required as a cofactor.

Serves to protect the cell against DNA damage by alkyl hydroperoxides. It can use either NADH or NADPH as electron donor for direct reduction of redox dyes or of alkyl hydroperoxides when combined with the AhpC protein. This is Alkyl hydroperoxide reductase subunit F (ahpF) from Staphylococcus aureus (strain Mu50 / ATCC 700699).